Reading from the N-terminus, the 276-residue chain is Tryptophan synthase alpha chain (276 aa).

Active-site proton acceptor residues include Glu49 and Asp60.

This sequence belongs to the TrpA family. As to quaternary structure, tetramer of two alpha and two beta chains.

The enzyme catalyses (1S,2R)-1-C-(indol-3-yl)glycerol 3-phosphate + L-serine = D-glyceraldehyde 3-phosphate + L-tryptophan + H2O. The protein operates within amino-acid biosynthesis; L-tryptophan biosynthesis; L-tryptophan from chorismate: step 5/5. In terms of biological role, the alpha subunit is responsible for the aldol cleavage of indoleglycerol phosphate to indole and glyceraldehyde 3-phosphate. In Acidiphilium cryptum (strain JF-5), this protein is Tryptophan synthase alpha chain.